A 287-amino-acid chain; its full sequence is uncharacterized protein (287 aa).

The tract at residues 1–23 (MTVSDSPAQRQTPPQTPGGTAPR) is disordered. Residues 7 to 23 (PAQRQTPPQTPGGTAPR) are compositionally biased toward low complexity. Residues Asp-31, Asp-33, and Asp-204 each contribute to the Mg(2+) site.

Belongs to the HAD-like hydrolase superfamily. SerB family.

This is an uncharacterized protein from Mycobacterium tuberculosis (strain CDC 1551 / Oshkosh).